We begin with the raw amino-acid sequence, 154 residues long: NADPH-dependent 7-cyano-7-deazaguanine reductase (154 aa).

Cys-54 acts as the Thioimide intermediate in catalysis. The active-site Proton donor is the Asp-61. Substrate-binding positions include 76–78 and 95–96; these read VES and HE.

The protein belongs to the GTP cyclohydrolase I family. QueF type 1 subfamily.

The protein resides in the cytoplasm. It catalyses the reaction 7-aminomethyl-7-carbaguanine + 2 NADP(+) = 7-cyano-7-deazaguanine + 2 NADPH + 3 H(+). It participates in tRNA modification; tRNA-queuosine biosynthesis. Its function is as follows. Catalyzes the NADPH-dependent reduction of 7-cyano-7-deazaguanine (preQ0) to 7-aminomethyl-7-deazaguanine (preQ1). The protein is NADPH-dependent 7-cyano-7-deazaguanine reductase of Porphyromonas gingivalis (strain ATCC 33277 / DSM 20709 / CIP 103683 / JCM 12257 / NCTC 11834 / 2561).